Here is an 86-residue protein sequence, read N- to C-terminus: Large ribosomal subunit protein bL27c (86 aa).

The interval 1–27 (MAHKKGSGSTRNGRDSNSKRLGVKKYG) is disordered.

This sequence belongs to the bacterial ribosomal protein bL27 family.

It localises to the plastid. Its subcellular location is the chloroplast. The polypeptide is Large ribosomal subunit protein bL27c (rpl27) (Porphyra purpurea (Red seaweed)).